We begin with the raw amino-acid sequence, 159 residues long: Ribosomal RNA large subunit methyltransferase H (159 aa).

S-adenosyl-L-methionine is bound by residues leucine 76, glycine 108, and 127 to 132; that span reads FGKLTM.

The protein belongs to the RNA methyltransferase RlmH family. Homodimer.

The protein resides in the cytoplasm. The enzyme catalyses pseudouridine(1915) in 23S rRNA + S-adenosyl-L-methionine = N(3)-methylpseudouridine(1915) in 23S rRNA + S-adenosyl-L-homocysteine + H(+). In terms of biological role, specifically methylates the pseudouridine at position 1915 (m3Psi1915) in 23S rRNA. The chain is Ribosomal RNA large subunit methyltransferase H from Lactobacillus delbrueckii subsp. bulgaricus (strain ATCC 11842 / DSM 20081 / BCRC 10696 / JCM 1002 / NBRC 13953 / NCIMB 11778 / NCTC 12712 / WDCM 00102 / Lb 14).